We begin with the raw amino-acid sequence, 557 residues long: MRSDLMKKGVEKAPHRSLFKAMGYTQTELDRPLIGVANSANEIIPGHIHLDKVAEAVKAGIRLAGGTPIEFSTIGVCDGIAMNHAGMRYSLASRELIADSVEIMSMAHPFDGLVAVPNCDKIIPGMLMAMLRLDIPAILISGGPMLAGRAGHKQVDLVSVFEAVGSFKAGTITMEELEQLEDYACPGCGSCAGMFTANSMNCLSEALGLALPGNGTIPAVTGARMRLAKLAGMRIVELIKADIRPRQIATQKAFENAITVDMALGCSTNTVLHVPAIAREAGIDLDLGLFNTLSSRTPHLCSLRPGGPHFLENLDQAGGVQAVMKELLARDLIHRDAMTVTGLTVGKNLESSKNTDPTVIRPISDPYHNEGGIAILYGNLAPEGAVVKQSAVAPEMLQRTCRARVFESETDAAGGILDGKIKPGDVVVIRYEGPKGGPGMQEMLTPTAAIIGMGLGKDVALITDGRFSGGTQGAAIGHVSPEAAVGGPIALIEEGDEILVDILNKRLELMVDDATLKARRDKWKAPAPRMTQGYLARYAHMVTSGSTGAVLRTEQDK.

Mg(2+) is bound at residue aspartate 78. [2Fe-2S] cluster is bound at residue cysteine 119. 2 residues coordinate Mg(2+): aspartate 120 and lysine 121. Position 121 is an N6-carboxylysine (lysine 121). Residue cysteine 191 coordinates [2Fe-2S] cluster. Glutamate 442 contributes to the Mg(2+) binding site. The active-site Proton acceptor is the serine 468.

This sequence belongs to the IlvD/Edd family. In terms of assembly, homodimer. Requires [2Fe-2S] cluster as cofactor. The cofactor is Mg(2+).

It carries out the reaction (2R)-2,3-dihydroxy-3-methylbutanoate = 3-methyl-2-oxobutanoate + H2O. The enzyme catalyses (2R,3R)-2,3-dihydroxy-3-methylpentanoate = (S)-3-methyl-2-oxopentanoate + H2O. It participates in amino-acid biosynthesis; L-isoleucine biosynthesis; L-isoleucine from 2-oxobutanoate: step 3/4. It functions in the pathway amino-acid biosynthesis; L-valine biosynthesis; L-valine from pyruvate: step 3/4. Functions in the biosynthesis of branched-chain amino acids. Catalyzes the dehydration of (2R,3R)-2,3-dihydroxy-3-methylpentanoate (2,3-dihydroxy-3-methylvalerate) into 2-oxo-3-methylpentanoate (2-oxo-3-methylvalerate) and of (2R)-2,3-dihydroxy-3-methylbutanoate (2,3-dihydroxyisovalerate) into 2-oxo-3-methylbutanoate (2-oxoisovalerate), the penultimate precursor to L-isoleucine and L-valine, respectively. The chain is Dihydroxy-acid dehydratase from Syntrophobacter fumaroxidans (strain DSM 10017 / MPOB).